Consider the following 38-residue polypeptide: Photosystem II reaction center protein L (38 aa).

The chain crosses the membrane as a helical span at residues 17 to 37; sequence SLYWGLLLIFVLAVLFSSYIF.

It belongs to the PsbL family. As to quaternary structure, PSII is composed of 1 copy each of membrane proteins PsbA, PsbB, PsbC, PsbD, PsbE, PsbF, PsbH, PsbI, PsbJ, PsbK, PsbL, PsbM, PsbT, PsbY, PsbZ, Psb30/Ycf12, at least 3 peripheral proteins of the oxygen-evolving complex and a large number of cofactors. It forms dimeric complexes.

Its subcellular location is the plastid. The protein resides in the chloroplast thylakoid membrane. Its function is as follows. One of the components of the core complex of photosystem II (PSII). PSII is a light-driven water:plastoquinone oxidoreductase that uses light energy to abstract electrons from H(2)O, generating O(2) and a proton gradient subsequently used for ATP formation. It consists of a core antenna complex that captures photons, and an electron transfer chain that converts photonic excitation into a charge separation. This subunit is found at the monomer-monomer interface and is required for correct PSII assembly and/or dimerization. This Bigelowiella natans (Pedinomonas minutissima) protein is Photosystem II reaction center protein L.